A 488-amino-acid chain; its full sequence is Glutamyl-tRNA(Gln) amidotransferase subunit A (488 aa).

Active-site charge relay system residues include Lys80 and Ser155. Ser179 functions as the Acyl-ester intermediate in the catalytic mechanism.

This sequence belongs to the amidase family. GatA subfamily. Heterotrimer of A, B and C subunits.

The enzyme catalyses L-glutamyl-tRNA(Gln) + L-glutamine + ATP + H2O = L-glutaminyl-tRNA(Gln) + L-glutamate + ADP + phosphate + H(+). Its function is as follows. Allows the formation of correctly charged Gln-tRNA(Gln) through the transamidation of misacylated Glu-tRNA(Gln) in organisms which lack glutaminyl-tRNA synthetase. The reaction takes place in the presence of glutamine and ATP through an activated gamma-phospho-Glu-tRNA(Gln). This chain is Glutamyl-tRNA(Gln) amidotransferase subunit A, found in Chloroflexus aggregans (strain MD-66 / DSM 9485).